A 199-amino-acid polypeptide reads, in one-letter code: 3-isopropylmalate dehydratase small subunit (199 aa).

The protein belongs to the LeuD family. LeuD type 1 subfamily. As to quaternary structure, heterodimer of LeuC and LeuD.

The enzyme catalyses (2R,3S)-3-isopropylmalate = (2S)-2-isopropylmalate. Its pathway is amino-acid biosynthesis; L-leucine biosynthesis; L-leucine from 3-methyl-2-oxobutanoate: step 2/4. Catalyzes the isomerization between 2-isopropylmalate and 3-isopropylmalate, via the formation of 2-isopropylmaleate. In Aeromonas hydrophila subsp. hydrophila (strain ATCC 7966 / DSM 30187 / BCRC 13018 / CCUG 14551 / JCM 1027 / KCTC 2358 / NCIMB 9240 / NCTC 8049), this protein is 3-isopropylmalate dehydratase small subunit.